Reading from the N-terminus, the 343-residue chain is Phospholipid phosphatase-related protein type 2 (343 aa).

3 helical membrane passes run 12–32 (FSII…VVLL), 72–92 (ALIY…GELA), and 129–149 (FLGV…AGQV). The N-linked (GlcNAc...) asparagine glycan is linked to asparagine 165. 3 consecutive transmembrane segments (helical) span residues 210 to 230 (AALC…VFRV), 239 to 259 (SLCL…VAEY), and 266 to 286 (VLAG…CVVH). Positions 291–343 (RPHSGRRLSPWEDLSQAPTMDSPLEKNPRPAGRIRHRHGSPHPSRRTVPAVAT) are disordered. 2 positions are modified to phosphoserine: serine 299 and serine 312. A compositionally biased stretch (basic residues) spans 322-335 (GRIRHRHGSPHPSR).

The protein belongs to the PA-phosphatase related phosphoesterase family.

Its subcellular location is the membrane. In Mus musculus (Mouse), this protein is Phospholipid phosphatase-related protein type 2.